Here is a 58-residue protein sequence, read N- to C-terminus: Large ribosomal subunit protein uL30 (58 aa).

The protein belongs to the universal ribosomal protein uL30 family. Part of the 50S ribosomal subunit.

The chain is Large ribosomal subunit protein uL30 from Pseudomonas entomophila (strain L48).